The chain runs to 444 residues: Acyl-CoA (8-3)-desaturase (444 aa).

Residue M1 is modified to N-acetylmethionine. Residues 1–121 (MAPDPVAAET…FRELRATVER (121 aa)) lie on the Cytoplasmic side of the membrane. Residues 17-94 (PRYFTWDEVA…MNSLLIGELS (78 aa)) enclose the Cytochrome b5 heme-binding domain. Residues 122-142 (MGLMKANHVFFLLYLLHILLL) form a helical membrane-spanning segment. Residues 143–145 (DGA) lie on the Lumenal side of the membrane. A helical membrane pass occupies residues 146 to 170 (AWLTLWVFGTSFLPFLLCAVLLSAV). At 171 to 267 (QAQAGWLQHD…PYNHQHKYFF (97 aa)) the chain is on the cytoplasmic side. The short motif at 179–183 (HDFGH) is the Histidine box-1 element. The Histidine box-2 signature appears at 216-220 (HFQHH). A helical membrane pass occupies residues 268 to 288 (LIGPPALLPLYFQWYIFYFVI). The Lumenal segment spans residues 289-305 (QRKKWVDLAWMITFYVR). The helical transmembrane segment at 306–326 (FFLTYVPLLGLKAFLGLFFIV) threads the bilayer. The Cytoplasmic portion of the chain corresponds to 327–444 (RFLESNWFVW…QLWLDAYLHQ (118 aa)). A Histidine box-3 motif is present at residues 382–386 (QIEHH).

The protein belongs to the fatty acid desaturase type 1 family. In terms of tissue distribution, widely expressed, with highest levels in liver, brain, adrenal gland and heart. Highly expressed in fetal liver and brain.

It localises to the endoplasmic reticulum membrane. The protein localises to the mitochondrion. It carries out the reaction (8Z,11Z,14Z)-eicosatrienoyl-CoA + 2 Fe(II)-[cytochrome b5] + O2 + 2 H(+) = (5Z,8Z,11Z,14Z)-eicosatetraenoyl-CoA + 2 Fe(III)-[cytochrome b5] + 2 H2O. The enzyme catalyses (8Z,11Z,14Z,17Z)-eicosatetraenoyl-CoA + 2 Fe(II)-[cytochrome b5] + O2 + 2 H(+) = (5Z,8Z,11Z,14Z,17Z)-eicosapentaenoyl-CoA + 2 Fe(III)-[cytochrome b5] + 2 H2O. It catalyses the reaction (11E)-octadecenoyl-CoA + 2 Fe(II)-[cytochrome b5] + O2 + 2 H(+) = (5Z,11E)-octadecadienoyl-CoA + 2 Fe(III)-[cytochrome b5] + 2 H2O. The protein operates within lipid metabolism; polyunsaturated fatty acid biosynthesis. Its function is as follows. Acts as a front-end fatty acyl-coenzyme A (CoA) desaturase that introduces a cis double bond at carbon 5 located between a preexisting double bond and the carboxyl end of the fatty acyl chain. Involved in biosynthesis of highly unsaturated fatty acids (HUFA) from the essential polyunsaturated fatty acids (PUFA) linoleic acid (LA) (18:2n-6) and alpha-linolenic acid (ALA) (18:3n-3) precursors. Specifically, desaturates dihomo-gamma-linoleoate (DGLA) (20:3n-6) and eicosatetraenoate (ETA) (20:4n-3) to generate arachidonate (AA) (20:4n-6) and eicosapentaenoate (EPA) (20:5n-3), respectively. As a rate limiting enzyme for DGLA (20:3n-6) and AA (20:4n-6)-derived eicosanoid biosynthesis, controls the metabolism of inflammatory lipids like prostaglandin E2, critical for efficient acute inflammatory response and maintenance of epithelium homeostasis. Contributes to membrane phospholipid biosynthesis by providing AA (20:4n-6) as a major acyl chain esterified into phospholipids. In particular, regulates phosphatidylinositol-4,5-bisphosphate levels, modulating inflammatory cytokine production in T-cells. Also desaturates (11E)-octadecenoate (trans-vaccenoate)(18:1n-9), a metabolite in the biohydrogenation pathway of LA (18:2n-6). Functionally, does not exhibit any catalytic activity toward 20:3n-6, but it may enhance FADS2 activity. This is Acyl-CoA (8-3)-desaturase from Homo sapiens (Human).